A 305-amino-acid chain; its full sequence is Dihydroorotate dehydrogenase B (NAD(+)), catalytic subunit (305 aa).

FMN contacts are provided by residues Ser-23 and 47–48 (KG). Substrate-binding positions include Lys-47 and 71–75 (NAIGL). Asn-101 and Asn-129 together coordinate FMN. Asn-129 lines the substrate pocket. Cys-132 functions as the Nucleophile in the catalytic mechanism. The FMN site is built by Lys-167 and Ile-193. A substrate-binding site is contributed by 194-195 (NT). FMN-binding positions include Gly-219, 245 to 246 (GG), and 267 to 268 (GT).

The protein belongs to the dihydroorotate dehydrogenase family. Type 1 subfamily. Heterotetramer of 2 PyrK and 2 PyrD type B subunits. Requires FMN as cofactor.

The protein localises to the cytoplasm. The enzyme catalyses (S)-dihydroorotate + NAD(+) = orotate + NADH + H(+). It participates in pyrimidine metabolism; UMP biosynthesis via de novo pathway; orotate from (S)-dihydroorotate (NAD(+) route): step 1/1. In terms of biological role, catalyzes the conversion of dihydroorotate to orotate with NAD(+) as electron acceptor. The sequence is that of Dihydroorotate dehydrogenase B (NAD(+)), catalytic subunit (pyrD) from Citrifermentans bemidjiense (strain ATCC BAA-1014 / DSM 16622 / JCM 12645 / Bem) (Geobacter bemidjiensis).